The primary structure comprises 156 residues: Small ribosomal subunit protein uS7 (156 aa).

It belongs to the universal ribosomal protein uS7 family. Part of the 30S ribosomal subunit. Contacts proteins S9 and S11.

Functionally, one of the primary rRNA binding proteins, it binds directly to 16S rRNA where it nucleates assembly of the head domain of the 30S subunit. Is located at the subunit interface close to the decoding center, probably blocks exit of the E-site tRNA. The sequence is that of Small ribosomal subunit protein uS7 from Methylibium petroleiphilum (strain ATCC BAA-1232 / LMG 22953 / PM1).